Consider the following 480-residue polypeptide: Transposase for transposon Tn552 (480 aa).

Positions 36–55 (LSSISKSKGIALSTLYRWNK) form a DNA-binding region, H-T-H motif. The Integrase catalytic domain occupies 155–341 (ESSRPNEIWQ…TPINRWNSNH (187 aa)). Positions 438-480 (RKHLKQNIASPSTTDLIKEEKSYGYSPQETTKNVKKLKRYRND) are disordered. A compositionally biased stretch (basic residues) spans 470–480 (NVKKLKRYRND).

This is Transposase for transposon Tn552 from Staphylococcus aureus.